The chain runs to 200 residues: MSTKSYDYLIKLLLIGDSGVGKSCLLLRFSEDSFTPSFITTIGIDFKIRTIELDGKRIKLQIWDTAGQERFRTITTAYYRGAMGILLLYDVTDKKSFDNVRTWFSNVEQHASENVYKILIGNKCDCEDQRQVSFEQGQALADELGVKFLEASAKTNVNVDEAFFTLAREIKKQKIDAENEFSNQANNVDLGNDRTVKRCC.

Glycine 16–serine 23 serves as a coordination point for GTP. Residues phenylalanine 38–phenylalanine 46 carry the Effector region motif. GTP contacts are provided by residues aspartate 64–glutamine 68 and asparagine 122–aspartate 125. Residues cysteine 199 and cysteine 200 are each lipidated (S-geranylgeranyl cysteine).

This sequence belongs to the small GTPase superfamily. Rab family.

It is found in the cell membrane. In terms of biological role, protein transport. Probably involved in vesicular traffic. The protein is GTP-binding protein ypt2 (ypt2) of Schizosaccharomyces pombe (strain 972 / ATCC 24843) (Fission yeast).